The chain runs to 784 residues: MKKRIPTLLATMIATALYSQQGLAADLASQCMLGVPSYDRPLVQGDTNDLPVTINADHAKGDYPDDAVFTGSVDIMQGNSRLQADEVQLHQKEAPGQPEPVRTVDALGNVHYDDNQVILKGPKGWANLNTKDTNVWEGDYQMVGRQGRGKADLMKQRGENRYTILDNGSFTSCLPGSDTWSVVGSEIIHDREEQVAEIWNARFKVGPVPIFYSPYLQLPVGDKRRSGFLIPNAKYTTTNYFEFYLPYYWNIAPNMDATITPHYMHRRGNIMWENEFRYLSQAGAGLMELDYLPSDKVYEDEHPNDDSSRRWLFYWNHSGVMDQVWRFNVDYTKVSDPSYFNDFDNKYGSSTDGYATQKFSVGYAVQNFNATVSTKQFQVFSEQNTSSYSAEPQLDVNYYQNDVGPFDTRIYGQAVHFVNTRDDMPEATRVHLEPTINLPLSNNWGSINTEAKFLATHYQQTNLDWYNSRNTTKLDESVNRVMPQFKVDGKMVFERDIEMLAPGYTQTLEPRAQYLYVPYRDQSDIYNYDSSLLQSDYSGLFRDRTYGGLDRIASANQVTTGVTSRIYDDAAVERFNISVGQIYYFTESRTGDDNITWENDDKTGSLVWAGDTYWRISERWGLRGGIQYDTRLDNVATSNSSIEYRRDEDRLVQLNYHYASPEYIQATLPKYYSTAEQYKNGISQVGAVASRPIADRWSIVGAYYYDTNANKQADSMLGVQYSSCCYAIRVGYERKLNGWDNDKQHAVYDNAIGFNIELRGLSSNYGLGTQEMLRSNILPYQNTL.

An N-terminal signal peptide occupies residues 1–24 (MKKRIPTLLATMIATALYSQQGLA). Cystine bridges form between Cys31–Cys724 and Cys173–Cys725.

Belongs to the LptD family. As to quaternary structure, component of the lipopolysaccharide transport and assembly complex. Interacts with LptE and LptA. In terms of processing, contains two intramolecular disulfide bonds.

The protein localises to the cell outer membrane. Functionally, together with LptE, is involved in the assembly of lipopolysaccharide (LPS) at the surface of the outer membrane. The polypeptide is LPS-assembly protein LptD (Shigella flexneri serotype 5b (strain 8401)).